The following is a 451-amino-acid chain: Enolase (451 aa).

Residue Q167 participates in (2R)-2-phosphoglycerate binding. The Proton donor role is filled by E209. Residues D250, E307, and D334 each coordinate Mg(2+). Residues K359, R388, S389, and K410 each contribute to the (2R)-2-phosphoglycerate site. The active-site Proton acceptor is the K359.

The protein belongs to the enolase family. Mg(2+) serves as cofactor.

It is found in the cytoplasm. Its subcellular location is the secreted. The protein resides in the cell surface. It carries out the reaction (2R)-2-phosphoglycerate = phosphoenolpyruvate + H2O. It participates in carbohydrate degradation; glycolysis; pyruvate from D-glyceraldehyde 3-phosphate: step 4/5. Functionally, catalyzes the reversible conversion of 2-phosphoglycerate (2-PG) into phosphoenolpyruvate (PEP). It is essential for the degradation of carbohydrates via glycolysis. This Mesomycoplasma hyopneumoniae (strain J / ATCC 25934 / NCTC 10110) (Mycoplasma hyopneumoniae) protein is Enolase.